We begin with the raw amino-acid sequence, 157 residues long: Vitamin K-dependent protein C (157 aa).

One can recognise a Peptidase S1 domain in the interval 1-157 (EKWELDLDIK…GCGRLHNYGV (157 aa)). An N-linked (GlcNAc...) asparagine glycan is attached at N17. Catalysis depends on D26, which acts as the Charge relay system. A glycan (N-linked (GlcNAc...) asparagine) is linked at N78. Cystine bridges form between C96-C110 and C121-C149. The active-site Charge relay system is the S125.

Belongs to the peptidase S1 family. Plasma; synthesized in the liver.

It localises to the secreted. It is found in the golgi apparatus. Its subcellular location is the endoplasmic reticulum. The catalysed reaction is Degradation of blood coagulation factors Va and VIIIa.. Protein C is a vitamin K-dependent serine protease that regulates blood coagulation by inactivating factors Va and VIIIa in the presence of calcium ions and phospholipids. Exerts a protective effect on the endothelial cell barrier function. This Felis catus (Cat) protein is Vitamin K-dependent protein C (PROC).